Consider the following 458-residue polypeptide: Ammonium transporter Rh type B (458 aa).

Residues 1-13 (MAGSPSRAAGRRL) lie on the Cytoplasmic side of the membrane. The chain crosses the membrane as a helical span at residues 14–34 (QLPLLCLFLQGATAVLFAVFV). The Extracellular segment spans residues 35 to 61 (RYNHKTDAALWHRGNHSNADNEFYFRY). N-linked (GlcNAc...) asparagine glycosylation occurs at N49. The helical transmembrane segment at 62–82 (PSFQDVHAMVFVGFGFLMVFL) threads the bilayer. Residues 83 to 86 (QRYG) lie on the Cytoplasmic side of the membrane. Residues 87–107 (FSSVGFTFLLAAFALQWSTLV) traverse the membrane as a helical segment. The Extracellular segment spans residues 108-124 (QGFLHSFHSGHIHVGVE). Residues 125–145 (SMINADFCAGAVLISFGAVLG) form a helical membrane-spanning segment. The Cytoplasmic segment spans residues 146-149 (KTGP). A helical membrane pass occupies residues 150–170 (AQLLLMALLEVVLFGINEFVL). Topologically, residues 171-178 (LHLLGVRD) are extracellular. A helical transmembrane segment spans residues 179–201 (AGGSMTIHTFGAYFGLVLSRVLY). At 202–219 (RPQLEKSKHRQGSVYHSD) the chain is on the cytoplasmic side. A helical membrane pass occupies residues 220–240 (LFAMIGTIFLWIFWPSFNSAL). Residues 241–251 (TALGAGQHRTA) lie on the Extracellular side of the membrane. Residues 252-272 (LNTYYSLAASTLGTFALSALV) traverse the membrane as a helical segment. Residues 273–282 (GEDGRLDMVH) lie on the Cytoplasmic side of the membrane. Residues 283 to 303 (IQNAALAGGVVVGTSSEMMLT) traverse the membrane as a helical segment. P304 is a topological domain (extracellular). The chain crosses the membrane as a helical span at residues 305 to 325 (FGALAAGFLAGTVSTLGYKFF). Residues 326–346 (TPILESKFKVQDTCGVHNLHG) lie on the Cytoplasmic side of the membrane. Residues 347–367 (MPGVLGALLGVLVAGLATHEA) form a helical membrane-spanning segment. Over 368–393 (YGDGLESVFPLIAEGQRSATSQAMLQ) the chain is Extracellular. Residues 394–414 (LFGLFVTLMFASVGGGLGGLL) traverse the membrane as a helical segment. Over 415–458 (LKLPFLDSPPDSQCYEDQVHWQVPGEHEDEAQRPLRVEEADTQA) the chain is Cytoplasmic. The interval 416–424 (KLPFLDSPP) is interaction with ANK3. A Basolateral sorting signal motif is present at residues 429 to 432 (YEDQ). A disordered region spans residues 439-458 (GEHEDEAQRPLRVEEADTQA). The segment covering 444 to 458 (EAQRPLRVEEADTQA) has biased composition (basic and acidic residues).

The protein belongs to the ammonium transporter (TC 2.A.49) family. Rh subfamily. In terms of assembly, interacts (via C-terminus) with ANK2 and ANK3; required for targeting to the basolateral membrane. Post-translationally, N-glycosylated.

It is found in the cell membrane. The protein resides in the basolateral cell membrane. It catalyses the reaction NH4(+)(in) = NH4(+)(out). The catalysed reaction is methylamine(out) = methylamine(in). It carries out the reaction CO2(out) = CO2(in). Ammonium transporter involved in the maintenance of acid-base homeostasis. Transports ammonium and its related derivative methylammonium across the basolateral plasma membrane of epithelial cells likely contributing to renal transepithelial ammonia transport and ammonia metabolism. May transport either NH4(+) or NH3 ammonia species predominantly mediating an electrogenic NH4(+) transport. May act as a CO2 channel providing for renal acid secretion. The protein is Ammonium transporter Rh type B (RHBG) of Macaca mulatta (Rhesus macaque).